Reading from the N-terminus, the 337-residue chain is Molybdate import system permease protein MolB (337 aa).

The Cytoplasmic portion of the chain corresponds to Met-1–Ser-5. Residues Tyr-6–Leu-25 form a helical membrane-spanning segment. Topologically, residues Gly-26–Asp-51 are periplasmic. The chain crosses the membrane as a helical span at residues Pro-52–Phe-87. The Cytoplasmic portion of the chain corresponds to Arg-88 to Gly-98. A helical transmembrane segment spans residues Val-99–Phe-113. The Periplasmic portion of the chain corresponds to Gly-114 to Ser-116. Residues Leu-117 to Phe-140 form a helical membrane-spanning segment. Residues Lys-141–Ser-146 lie on the Cytoplasmic side of the membrane. Residues Leu-147–Ile-171 traverse the membrane as a helical segment. Over Ser-172–Asn-193 the chain is Periplasmic. A helical membrane pass occupies residues Trp-194 to Leu-214. At Ser-215 to Lys-234 the chain is on the cytoplasmic side. The chain crosses the membrane as a helical span at residues Met-235–Ser-257. Residues Gly-258 to Gly-264 lie on the Periplasmic side of the membrane. Residues Leu-265–Val-275 form a helical membrane-spanning segment. The Cytoplasmic segment spans residues Gly-276–Asn-278. Residues His-279 to Leu-304 form a helical membrane-spanning segment. Residues Ser-305–Pro-310 are Periplasmic-facing. The chain crosses the membrane as a helical span at residues Ile-311–Lys-329. Topologically, residues Leu-330–Glu-337 are cytoplasmic.

Belongs to the binding-protein-dependent transport system permease family. FecCD subfamily. The complex is composed of two ATP-binding proteins (MolC), two transmembrane proteins (MolB) and a solute-binding protein (MolA).

The protein localises to the cell inner membrane. With respect to regulation, the MolBCA complex shows a decrease in affinity in the presence of increasing concentrations of substrate and nucleotide. Its function is as follows. Part of the ABC transporter complex MolBCA involved in molybdate import. Responsible for the translocation of the substrate across the membrane. Functions as a low-affinity molybdate transporter. The sequence is that of Molybdate import system permease protein MolB from Haemophilus influenzae (strain ATCC 51907 / DSM 11121 / KW20 / Rd).